A 326-amino-acid polypeptide reads, in one-letter code: UDP-N-acetylglucosamine transporter (326 aa).

8 helical membrane-spanning segments follow: residues 4–24, 38–58, 136–156, 174–194, 212–232, 243–263, 269–289, and 293–313; these read NLKY…VLTM, LSST…IFLV, LGVY…FVQW, FVGL…GVYF, LGFF…GELV, QLTW…AAVI, ILKG…SYFW, and FVPT…TFLY.

The protein belongs to the nucleotide-sugar transporter family. SLC35A subfamily. In terms of assembly, interacts with SLC35A2; the interaction is reduced in the presence of SLC35A4. Found in a complex with SLC35A2 and SLC35A4. Interacts with MGAT4B. In terms of processing, O-Glcnacylation regulates the stability of SLC35A3 and the specific complex formation with MGAT4B.

It localises to the golgi apparatus membrane. It catalyses the reaction UMP(out) + UDP-N-acetyl-alpha-D-glucosamine(in) = UMP(in) + UDP-N-acetyl-alpha-D-glucosamine(out). Transports diphosphate-N-acetylglucosamine (UDP-GlcNAc) from the cytosol into the lumen of the Golgi apparatus, functioning as an antiporter that exchanges UDP-N-acetyl-alpha-D-glucosamine for UMP. May supply UDP-GlcNAc as substrate for Golgi-resident glycosyltransferases that generate highly branched, multiantennary complex N-glycans and keratan sulfate. However, the exact role of SLC35A3 still needs to be elucidated, it could be a member of a catalytically more efficient multiprotein complex rather than function independently as a single transporter. The protein is UDP-N-acetylglucosamine transporter (Slc35a3) of Mus musculus (Mouse).